The sequence spans 218 residues: Large ribosomal subunit protein uL3 (218 aa).

The disordered stretch occupies residues 124-162 (KRHGFSRGPMTHGSKNHREPGSTGAGTTPGRIYPGKRMA).

This sequence belongs to the universal ribosomal protein uL3 family. As to quaternary structure, part of the 50S ribosomal subunit. Forms a cluster with proteins L14 and L19.

One of the primary rRNA binding proteins, it binds directly near the 3'-end of the 23S rRNA, where it nucleates assembly of the 50S subunit. The polypeptide is Large ribosomal subunit protein uL3 (Synechococcus sp. (strain CC9605)).